The following is a 176-amino-acid chain: ATP-dependent protease subunit HslV (176 aa).

The active site involves Thr2. Residues Gly158, Cys161, and Thr164 each contribute to the Na(+) site.

The protein belongs to the peptidase T1B family. HslV subfamily. A double ring-shaped homohexamer of HslV is capped on each side by a ring-shaped HslU homohexamer. The assembly of the HslU/HslV complex is dependent on binding of ATP.

Its subcellular location is the cytoplasm. It catalyses the reaction ATP-dependent cleavage of peptide bonds with broad specificity.. Allosterically activated by HslU binding. Protease subunit of a proteasome-like degradation complex believed to be a general protein degrading machinery. In Pasteurella multocida (strain Pm70), this protein is ATP-dependent protease subunit HslV.